The primary structure comprises 283 residues: MSKFLSQAALNTLRNTRLGSRQLVRSFAGIASTRNHSEPARQEEVYGQARGRSLLQMRMPVAGRRSMFIQTQDTPNPDSLKFLPGVDVLGKGNTYDFPNGTTAHSSPLAKLLFRVEGVKGVFFGADFVTISKQEGAEWSLIKPEVFAVIMDFFASGLPVLHDAQPNADTEILEDDDETVMMIKELLDTRIRPTVQEDGGDIVFMGYEAGVVKLKMQGSCSSCPSSIVTLKNGVQNMLQFYIPEVESVEQVFDEADRMVDSEFERFEKNLKTLKQQEPSGGGPQ.

The N-terminal 30 residues, 1-30 (MSKFLSQAALNTLRNTRLGSRQLVRSFAGI), are a transit peptide targeting the mitochondrion. Positions 182-250 (IKELLDTRIR…IPEVESVEQV (69 aa)) are nifU. 2 residues coordinate [4Fe-4S] cluster: C219 and C222.

It belongs to the NifU family.

The protein resides in the mitochondrion. Its function is as follows. Molecular scaffold for [Fe-S] cluster assembly of mitochondrial iron-sulfur proteins. This chain is NFU1 iron-sulfur cluster scaffold homolog, mitochondrial, found in Drosophila yakuba (Fruit fly).